A 554-amino-acid polypeptide reads, in one-letter code: L-ascorbate oxidase homolog (554 aa).

An N-terminal signal peptide occupies residues 1–21 (MGSGKVTFVALLLCLSVGVIA). 2 consecutive Plastocyanin-like domains span residues 22–143 (EDPY…LNVH) and 196–296 (SAKV…AIIR). N-linked (GlcNAc...) asparagine glycosylation is found at Asn31, Asn59, and Asn108. Cys101 and Cys540 form a disulfide bridge. Residues Asn332, Asn352, and Asn423 are each glycosylated (N-linked (GlcNAc...) asparagine). The region spanning 411 to 521 (DPSKLTIATN…LGEQLYFSVL (111 aa)) is the Plastocyanin-like 3 domain.

It belongs to the multicopper oxidase family. As to expression, pollen.

The protein resides in the secreted. It localises to the extracellular space. In terms of biological role, probable oxidoreductase that may be involved in pollen tube growth. This is L-ascorbate oxidase homolog from Nicotiana tabacum (Common tobacco).